Reading from the N-terminus, the 472-residue chain is TBC domain-containing protein C23D3.03c (472 aa).

One can recognise a Rab-GAP TBC domain in the interval 215–418; the sequence is GIPSRVRGRV…RILDCYVFEE (204 aa).

The protein is TBC domain-containing protein C23D3.03c of Schizosaccharomyces pombe (strain 972 / ATCC 24843) (Fission yeast).